The sequence spans 297 residues: B-lymphocyte antigen CD20 (297 aa).

At 1-51 (MTTPRNSMSGTLPVDPMKSPTAMYPVQKIIPKRMPSVVGPTQNFFMRESKT) the chain is on the cytoplasmic side. A Phosphoserine modification is found at serine 36. A helical transmembrane segment spans residues 52-72 (LGAVQIMNGLFHIALGSLLMI). Residues 73 to 75 (HTD) lie on the Extracellular side of the membrane. The chain crosses the membrane as a helical span at residues 76–96 (VCAPICITMWYPLWGGIMFII). Over 97-122 (SGSLLAAADKNPRKSLVKGKMIMNSL) the chain is Cytoplasmic. The chain crosses the membrane as a helical span at residues 123-143 (SLFAAISGIIFLIMDIFNITI). Over 144–188 (SHFFKMENLNLIKAPMPYVDIHNCDPANPSEKNSLSIQYCGSIRS) the chain is Extracellular. A helical transmembrane segment spans residues 189–209 (VFLGVFAVMLIFAFFQKLVTA). Over 210–297 (GIVENEWKKL…SSPIENDSIP (88 aa)) the chain is Cytoplasmic. Cysteine 220 carries S-palmitoyl cysteine lipidation. At serine 225 the chain carries Phosphoserine. The tract at residues 274–297 (ELEINFAEPPQEQESSPIENDSIP) is disordered. The segment covering 281–290 (EPPQEQESSP) has biased composition (low complexity).

Belongs to the MS4A family. In terms of assembly, forms homotetramers. Interacts with the heavy and light chains of cell surface IgM, the antigen-binding components of the BCR. In terms of processing, phosphorylated. Might be functionally regulated by protein kinase(s). In terms of tissue distribution, expressed in PBMCs and lymph node from healthy dogs, in B-cells of canine lymphoma, but not in T-cell lymphoma cells and non-T and non-B-cell lymphoma cells.

The protein localises to the cell membrane. In terms of biological role, B-lymphocyte-specific membrane protein that plays a role in the regulation of cellular calcium influx necessary for the development, differentiation, and activation of B-lymphocytes. Functions as a store-operated calcium (SOC) channel component promoting calcium influx after activation by the B-cell receptor/BCR. The sequence is that of B-lymphocyte antigen CD20 (MS4A1) from Canis lupus familiaris (Dog).